A 1090-amino-acid polypeptide reads, in one-letter code: MAQPRIPAARGAAASLQAQNGAASASGSPYTNGPVHNTLMSPQVSSSQGYDSQPPGSYPRPMPAKTLNPFSAQSNYGGSQGSGQTLNSPLVTSGPVLPSLHSGPVPRMPLPTSQNPAATPMPSGSFLPGANPPPPLNWQYNYPSTGPQTNHFPHVAPPTLPGNPNLTADHQYVSSGDPALQTSFKKPGSALPLQNPPLPPTFQPGAPPGPPPAGGPPPSRGPAPQKTPPRAAPPPSFNSAVNQEGITSNANNGSTAAHNTYDEIEGGGFLATPQLVNQNPKTSRSVGSAYPSLPPGYQNSAPPVAGMPPPSLSYPSGPQAFTQTPLGANHLTASMSGLSLHPEGLRVVNLLQERNMLPSTPLQPPVPNLLEDIQKLNCNPELFRCTLTSVPQTQALLNKAKLPLGLLLHPFKDLVQLPVVTSSTIVRCRSCRTYINPFVNFLDQRRWKCNLCYRVNDVPEEFMYNPLTRVYGEPHKRPEVQNATIEFMAPSEYMLRPPQPPVYLFVFDVSHNAIETGYLNSVCQSLLDNLDLLPGNTRTKIGFITFDSTIHFYSLQEGLSQPQMLIVSDIDDVFIPMPENLLVNLNESKELVQDLLKTLPQMFTKTLETQSALGPALQAAFKLISPTGGRMSVFQTQLPTLGVGALKPREEPNQRSSAKEIHLTPSTDFYKKLALDCSGQQAAVDLFLLSGQYSDLASLGCISRYSAGSVYYYPSYHHQHNPVQVQKLQKELHRYLTRKIGFEAVMRIRCTKGLSIHTFHGNFFVRSTDLLSLPNVNPDAGYAVQMSVEESLTDTQLVSFQSALLYTSSKGERRIRVHTLCLPVVSTLNEVFLGADVQAISGLLANMAVDRSVTASLSDARDALVNAVIDSLSAYRSSVLSGQQPGLMVPFSLRLFPLFVLALLKQKSFQTGTSIRLDERIFAMCQVKSQPLVHLMLTTHPSLYRVDNLSDEGALNINDRTIPQPPILQLSVEKLSRDGAFLMDAGSLLMLWVGRNCSQNFLSQVLGVQNYASIPQTMTDLPELDTPESARIAAFISWLREQRPFFPVLYVIREESLMKAAFLQSLVEDRTESALSYYEFLLHIQQQVNK.

2 disordered regions span residues 1–260 and 272–325; these read MAQP…AHNT and TPQL…TQTP. The span at 8–28 shows a compositional bias: low complexity; sequence AARGAAASLQAQNGAASASGS. 3 stretches are compositionally biased toward polar residues: residues 29 to 55, 138 to 151, and 162 to 184; these read PYTN…SQPP, WQYN…QTNH, and GNPN…QTSF. The segment covering 194 to 236 has biased composition (pro residues); sequence QNPPLPPTFQPGAPPGPPPAGGPPPSRGPAPQKTPPRAAPPPS. Polar residues-rich tracts occupy residues 237 to 258, 274 to 286, and 313 to 325; these read FNSA…TAAH, QLVN…SRSV, and SYPS…TQTP. Zn(2+)-binding residues include Cys-428, Cys-431, Cys-449, and Cys-452. The tract at residues 428 to 452 is zinc finger-like; sequence CRSCRTYINPFVNFLDQRRWKCNLC. One copy of the Gelsolin-like repeat lies at 963–1036; sequence PQPPILQLSV…PESARIAAFI (74 aa).

Belongs to the SEC23/SEC24 family. SEC24 subfamily. COPII is composed of at least five proteins: the Sec23/24 complex, the Sec13/31 complex and Sar1. Interacts with TMED2. Interacts (as part of the Sec23/24 complex) with SEC22B; recruits SEC22B into COPII-coated vesicles for its transport from the endoplasmic reticulum to the Golgi. Interacts with STING1; promoting STING1 translocation to COPII vesicles in a STEEP1-dependent manner. Interacts with TMEM39A. Interacts with SACM1L; this interaction is reduced in the absence of TMEM39A. Interacts with kinase FAM20C; transport of FAM20C from the endoplasmic reticulum to the Golgi is likely to be mediated by COPII vesicles.

The protein localises to the cytoplasmic vesicle. It localises to the COPII-coated vesicle membrane. The protein resides in the endoplasmic reticulum membrane. It is found in the cytoplasm. Its subcellular location is the cytosol. Component of the coat protein complex II (COPII) which promotes the formation of transport vesicles from the endoplasmic reticulum (ER). The coat has two main functions, the physical deformation of the endoplasmic reticulum membrane into vesicles and the selection of cargo molecules for their transport to the Golgi complex. Plays a central role in cargo selection within the COPII complex and together with SEC24B may have a different specificity compared to SEC24C and SEC24D. May package preferentially cargos with cytoplasmic DxE or LxxLE motifs and may also recognize conformational epitopes. This chain is Protein transport protein Sec24A, found in Mus musculus (Mouse).